An 876-amino-acid chain; its full sequence is MTDVVQDFNELYDRIENKYKLKYTFDCATNSNERMLFCAIQERKSYLCCALNEQLSCVMHKCVPVIFGTRLDKQFRETDDVDANNNINGTFMLDGRFLSFPNIMMNNNVLVHNFYDKLYAKHCKRMFLYGNVDQEKHINRAIQLVYDKQDDVLFARDVYASDYVVTEDLNSVLETYLANSGKWKPLDFLFEYNTLHKQQLVEHIKIIMNHDINYSIDSLANKIVYKHAYLIELLLTSTILQNYQRVLDKTADDDAYTVANKRRKIQSVLYNKESKKIVDCIVNGRLIYCVSKTFSKQRKVFPNQQDNSSNNNIEISLPVLKYRVGNEVARITNDSMRQKMLKQKKDFVKFIGSFFHGEMTVAGKKFFLCRNACLPNVDYEMVAQKFQYLLKHNLVAFVDDLNDVQDDSLLIAFNDRPTNLKCLKSNTSFIVYTMKRNMAPIELKITDRILYVNHHEGMICIKKKLRVNNEADINVLLTPYEYHYKHSIYYNPIIQCTIVENDDVKSLMSKLEQYYYRNFIHLFHTTPVPKLIVSLTNLKNAMPVFEYKEENCVSGLPNGYSVAVNKSILLNNKMFKLWTLVRDNKLMTAEDPYIPHIALPICLYNNKVNKLKGKLVVGPKQSCLVKFTNSSDKNYVALDDGLVLYMAGVLVSNAKINWVYDGRRYKIETCTNGNFNVYKVYVYFRQIKNQKIEKLDASMVVNGDNVMLKIVIVTSTNDLEGIKICGIHGQKGVFNRSEDLTEWMAEDGTHAQICLSPVSFLSRQSNFDKIERKYVVRGGNHDDPHAKRYPIFNIPYMLFNNTPDNIFKEFIKTSHTGHEKVEGTRFDQWTKNQSFVGNRMSESLHWMRGGSNLPQNCGEFNVVSSLLMCNNTIMKN.

It belongs to the RNA polymerase beta chain family. Interacts with LEF-4, LEF-9, and p47.

The enzyme catalyses RNA(n) + a ribonucleoside 5'-triphosphate = RNA(n+1) + diphosphate. In terms of biological role, component of the viral DNA-dependent RNA polymerase which is composed of four equimolar subunits of LEF-4, LEF-8, LEF-9, and p47. Plays an essential role in late and very late gene expression. This chain is Probable DNA-directed RNA polymerase catalytic subunit (LEF-8), found in Autographa californica nuclear polyhedrosis virus (AcMNPV).